A 45-amino-acid chain; its full sequence is Mu-conotoxin-like Cal 12.1.2e (45 aa).

Disulfide bonds link C3/C16, C11/C28, C18/C33, and C27/C39. W17 is modified (6'-bromotryptophan). P23 carries the 4-hydroxyproline modification. At W38 the chain carries 6'-bromotryptophan. P40 carries the post-translational modification 4-hydroxyproline.

In terms of tissue distribution, expressed by the venom duct.

The protein resides in the secreted. Functionally, mu-conotoxins block voltage-gated sodium channels. This toxin reversibly blocks voltage-gated sodium channel in cephalopods, with no alteration in the voltage dependence of sodium conductance or on the kinetics of inactivation. This Californiconus californicus (California cone) protein is Mu-conotoxin-like Cal 12.1.2e.